The primary structure comprises 306 residues: UDP-3-O-acyl-N-acetylglucosamine deacetylase (306 aa).

Residues His79, His238, and Asp242 each contribute to the Zn(2+) site. His265 serves as the catalytic Proton donor.

The protein belongs to the LpxC family. Requires Zn(2+) as cofactor.

The enzyme catalyses a UDP-3-O-[(3R)-3-hydroxyacyl]-N-acetyl-alpha-D-glucosamine + H2O = a UDP-3-O-[(3R)-3-hydroxyacyl]-alpha-D-glucosamine + acetate. The protein operates within glycolipid biosynthesis; lipid IV(A) biosynthesis; lipid IV(A) from (3R)-3-hydroxytetradecanoyl-[acyl-carrier-protein] and UDP-N-acetyl-alpha-D-glucosamine: step 2/6. Its function is as follows. Catalyzes the hydrolysis of UDP-3-O-myristoyl-N-acetylglucosamine to form UDP-3-O-myristoylglucosamine and acetate, the committed step in lipid A biosynthesis. This Shewanella frigidimarina (strain NCIMB 400) protein is UDP-3-O-acyl-N-acetylglucosamine deacetylase.